We begin with the raw amino-acid sequence, 699 residues long: SPS-sensor serine protease component SSY5 (699 aa).

Disordered regions lie at residues M1–F113 and V129–R158. Positions M1–A381 are excised as a propeptide. Over residues N24–G38 the composition is skewed to polar residues. Residues N39–N51 are compositionally biased toward basic and acidic residues. A compositionally biased stretch (low complexity) spans P52–R78. A compositionally biased stretch (polar residues) spans T83–E93. Low complexity-rich tracts occupy residues H97–N109 and S144–S154. The interval F459 to G699 is serine protease. Active-site charge relay system residues include H465, D545, and S640.

The protein belongs to the peptidase S64 family. Component of the plasma membrane SPS (SSY1-PTR3-SSY5) amino acid sensor complex. Post-translationally, the propeptide is autoproteolytically cleaved from the catalytic domain but remains associated, forming an inactive protease complex. This processing occurs even in the absence of signaling.

It is found in the cell membrane. Functionally, protease component of the SPS-sensor system, which regulates the expression of several amino acid-metabolizing enzymes and amino acid- and peptide-permeases in response to extracellular amino acid levels by controlling the activity of two transcription factors, STP1 and STP2. Catalyzes the activation of these transcription factors, which are synthesized as latent cytoplasmic precursors, by proteolytic removal of an N-terminal inhibitory domain containing cytoplasmic retention motifs. SSY5 binds as an inactive protease complex to STP1. In response to extracellular amino acids and dependent on the other SPS-sensor components, the inhibitory propeptide is induced to dissociate, and thereby enables the catalytic domain to process STP1. This Saccharomyces cerevisiae (strain YJM789) (Baker's yeast) protein is SPS-sensor serine protease component SSY5 (SSY5).